Here is a 270-residue protein sequence, read N- to C-terminus: MDYYFTKGKPQLVNMKTPIYLVTQFQQLMDLMQNQYEVSCLELMQRSGKAACDFLVYRWPKVKKISIFCGRGDNGGQGYVLAQQAKKMGMIPTVWQVGHQMSMSKPPQMHKEVWYEMNSCHQQGIVLHTYSPDIDLGDPELIVDALFGVGLYGHVRPEIALLLQRLQQFTVPILAIEVPTGINASTGEIAGNALAATATITFLCMKLGLLINDGKIYSGEIAFDDLLAPEEIYQQVKGIEESSLLDSSTCFSKKIWYRNKTQKGWQLSIN.

The region spanning 25–234 (FQQLMDLMQN…DLLAPEEIYQ (210 aa)) is the YjeF N-terminal domain. 73–77 (DNGGQ) serves as a coordination point for (6S)-NADPHX. Residues Asn74 and Asp144 each contribute to the K(+) site. Residues 148–154 (GVGLYGH) and Glu177 each bind (6S)-NADPHX. Thr180 is a K(+) binding site.

Belongs to the NnrE/AIBP family. Requires K(+) as cofactor.

It catalyses the reaction (6R)-NADHX = (6S)-NADHX. It carries out the reaction (6R)-NADPHX = (6S)-NADPHX. Catalyzes the epimerization of the S- and R-forms of NAD(P)HX, a damaged form of NAD(P)H that is a result of enzymatic or heat-dependent hydration. This is a prerequisite for the S-specific NAD(P)H-hydrate dehydratase to allow the repair of both epimers of NAD(P)HX. The polypeptide is NAD(P)H-hydrate epimerase (Legionella pneumophila (strain Paris)).